The primary structure comprises 197 residues: Imidazoleglycerol-phosphate dehydratase (197 aa).

Belongs to the imidazoleglycerol-phosphate dehydratase family.

It localises to the cytoplasm. It catalyses the reaction D-erythro-1-(imidazol-4-yl)glycerol 3-phosphate = 3-(imidazol-4-yl)-2-oxopropyl phosphate + H2O. Its pathway is amino-acid biosynthesis; L-histidine biosynthesis; L-histidine from 5-phospho-alpha-D-ribose 1-diphosphate: step 6/9. In Rhodopseudomonas palustris (strain BisB5), this protein is Imidazoleglycerol-phosphate dehydratase.